A 476-amino-acid chain; its full sequence is MKILFAASEIYPLIKTGGLADVAGALPVALRKKGHDVKLIMPAYQGILEKVAPIQKSINLGNPFGVGDLLLLETHIPENDTPIWLLQCQALYEREDGPYVDKNGIDFEDNHIRFAALSWATATLALHGHLMNWQADILHLNDWQTGFAAAYLESWKVEHIPVVTTVHNLRYNGSFDMNQFSAMHLSPELLNMHGMEFYGRFSGLKAGLVYANAVTTVSPTYAKEILTPEYGDGLDGALRAMQDRLVGILNGVDYNQWSPEKDTLIPHNYDIDTLSQKQANKLALLQENGLSEDLNQPVFGVVSRLTEQKGLDLVLQVMPALLEKGARLVVLGSGDKYLESQYLELQNNYPNQVSVRIGYFEDYSHRLQAGIDALLIPSRFEPCGLTQLYALKYGTLPIVRQTGGLADTVFEDGERANGFVFKEASAKALQAAMERSIECFHDTNRWQEKQKNAMCYDYSWDAVTDQWISLYESLIN.

Lys-15 serves as a coordination point for ADP-alpha-D-glucose.

It belongs to the glycosyltransferase 1 family. Bacterial/plant glycogen synthase subfamily.

It carries out the reaction [(1-&gt;4)-alpha-D-glucosyl](n) + ADP-alpha-D-glucose = [(1-&gt;4)-alpha-D-glucosyl](n+1) + ADP + H(+). The protein operates within glycan biosynthesis; glycogen biosynthesis. Functionally, synthesizes alpha-1,4-glucan chains using ADP-glucose. The polypeptide is Glycogen synthase (Marinomonas sp. (strain MWYL1)).